A 407-amino-acid chain; its full sequence is Probable tRNA sulfurtransferase (407 aa).

The THUMP domain maps to 61–165 (EEMCNRLKKV…LDAIYMYDQV (105 aa)). ATP contacts are provided by residues 183–184 (ML), 208–209 (HF), R265, G287, and Q296.

It belongs to the ThiI family.

It localises to the cytoplasm. The catalysed reaction is [ThiI sulfur-carrier protein]-S-sulfanyl-L-cysteine + a uridine in tRNA + 2 reduced [2Fe-2S]-[ferredoxin] + ATP + H(+) = [ThiI sulfur-carrier protein]-L-cysteine + a 4-thiouridine in tRNA + 2 oxidized [2Fe-2S]-[ferredoxin] + AMP + diphosphate. It carries out the reaction [ThiS sulfur-carrier protein]-C-terminal Gly-Gly-AMP + S-sulfanyl-L-cysteinyl-[cysteine desulfurase] + AH2 = [ThiS sulfur-carrier protein]-C-terminal-Gly-aminoethanethioate + L-cysteinyl-[cysteine desulfurase] + A + AMP + 2 H(+). It functions in the pathway cofactor biosynthesis; thiamine diphosphate biosynthesis. Catalyzes the ATP-dependent transfer of a sulfur to tRNA to produce 4-thiouridine in position 8 of tRNAs, which functions as a near-UV photosensor. Also catalyzes the transfer of sulfur to the sulfur carrier protein ThiS, forming ThiS-thiocarboxylate. This is a step in the synthesis of thiazole, in the thiamine biosynthesis pathway. The sulfur is donated as persulfide by IscS. In Staphylococcus saprophyticus subsp. saprophyticus (strain ATCC 15305 / DSM 20229 / NCIMB 8711 / NCTC 7292 / S-41), this protein is Probable tRNA sulfurtransferase.